The chain runs to 393 residues: tRNA (guanine-N(7)-)-methyltransferase (393 aa).

S-adenosyl-L-methionine is bound by residues Glu124, Glu149, and Asp176. Asp232 lines the substrate pocket.

The protein belongs to the class I-like SAM-binding methyltransferase superfamily. TrmB family.

The catalysed reaction is guanosine(46) in tRNA + S-adenosyl-L-methionine = N(7)-methylguanosine(46) in tRNA + S-adenosyl-L-homocysteine. It participates in tRNA modification; N(7)-methylguanine-tRNA biosynthesis. Catalyzes the formation of N(7)-methylguanine at position 46 (m7G46) in tRNA. In Helicobacter pylori (strain HPAG1), this protein is tRNA (guanine-N(7)-)-methyltransferase.